We begin with the raw amino-acid sequence, 854 residues long: Iron and copper transporter IacT (854 aa).

Positions 187–194 (IELIVTAQ) match the TonB box motif. The 117-residue stretch at 199-315 (DAQDVPLSLT…PAGVVNVISR (117 aa)) folds into the TBDR plug domain. The TBDR beta-barrel domain occupies 320–854 (QPEMRISALY…TYGVRVSASF (535 aa)). A TonB C-terminal box motif is present at residues 839–854 (GFGDPVTYGVRVSASF).

Belongs to the TonB-dependent receptor family.

The protein localises to the cell outer membrane. Its function is as follows. Involved in the TonB-dependent uptake of copper and iron under conditions in which the concentration of copper exceeds that of the iron. The sequence is that of Iron and copper transporter IacT from Nostoc sp. (strain PCC 7120 / SAG 25.82 / UTEX 2576).